Consider the following 348-residue polypeptide: Cyclin-dependent kinase inhibitor 1C (348 aa).

Residue R109 is modified to Omega-N-methylarginine. Residues 115–348 (VAVIPRSGPP…VEQTPRKRLR (234 aa)) form a disordered region. 2 stretches are compositionally biased toward acidic residues: residues 207–220 (QGEE…DELG) and 227–274 (QGEE…QDEN). Residues 275–284 (QEQRGQELKD) are compositionally biased toward basic and acidic residues. Positions 309–312 (KRKR) match the Nuclear localization signal motif.

Belongs to the CDI family. In terms of assembly, interacts with PCNA. Expressed in the heart, brain, lung, skeletal muscle, kidney, pancreas and testis. High levels are seen in the placenta while low levels are seen in the liver.

The protein resides in the nucleus. Its function is as follows. Potent tight-binding inhibitor of several G1 cyclin/CDK complexes (cyclin E-CDK2, cyclin D2-CDK4, and cyclin A-CDK2) and, to lesser extent, of the mitotic cyclin B-CDC2. Negative regulator of cell proliferation. May play a role in maintenance of the non-proliferative state throughout life. In Mus musculus (Mouse), this protein is Cyclin-dependent kinase inhibitor 1C (Cdkn1c).